Here is a 513-residue protein sequence, read N- to C-terminus: Acetylcholine receptor subunit delta (513 aa).

The first 18 residues, 1-18 (MAVLLALFGALVLSGGLC), serve as a signal peptide directing secretion. Residues 19–244 (VNQEERLIHH…ITFYLIIKRK (226 aa)) are Extracellular-facing. N88 and N161 each carry an N-linked (GlcNAc...) asparagine glycan. An intrachain disulfide couples C148 to C162. 3 helical membrane passes run 245 to 269 (PLFYVINIVTPCVLIAFMAILVFYL), 277 to 295 (MTLVISVLLAQSVFLLLVS), and 311 to 332 (YLLFIMLLVTAVVVICVVVLNF). The Cytoplasmic segment spans residues 333 to 467 (HFRTPSTHVM…WNRVARTLDR (135 aa)). At Y388 the chain carries Phosphotyrosine; by Tyr-kinases. A helical transmembrane segment spans residues 468-490 (LCLFLITPMLVVGTLWIFLMGIY).

This sequence belongs to the ligand-gated ion channel (TC 1.A.9) family. Acetylcholine receptor (TC 1.A.9.1) subfamily. As to quaternary structure, pentamer of two alpha chains, and one each of the beta, delta, and gamma chains.

It is found in the postsynaptic cell membrane. The protein resides in the cell membrane. It catalyses the reaction K(+)(in) = K(+)(out). The catalysed reaction is Na(+)(in) = Na(+)(out). In terms of biological role, after binding acetylcholine, the AChR responds by an extensive change in conformation that affects all subunits and leads to opening of an ion-conducting channel across the plasma membrane. In Gallus gallus (Chicken), this protein is Acetylcholine receptor subunit delta (CHRND).